A 482-amino-acid chain; its full sequence is tRNA sulfurtransferase (482 aa).

The region spanning 61–165 (LAIRDALTRI…DDRLLLIKGR (105 aa)) is the THUMP domain. ATP contacts are provided by residues 183–184 (LI), Lys-265, Gly-287, and Gln-296. The cysteines at positions 344 and 456 are disulfide-linked. The Rhodanese domain maps to 404-482 (FGPNDVILDI…GFNNVKVYRP (79 aa)). Cys-456 acts as the Cysteine persulfide intermediate in catalysis.

This sequence belongs to the ThiI family.

It localises to the cytoplasm. The catalysed reaction is [ThiI sulfur-carrier protein]-S-sulfanyl-L-cysteine + a uridine in tRNA + 2 reduced [2Fe-2S]-[ferredoxin] + ATP + H(+) = [ThiI sulfur-carrier protein]-L-cysteine + a 4-thiouridine in tRNA + 2 oxidized [2Fe-2S]-[ferredoxin] + AMP + diphosphate. The enzyme catalyses [ThiS sulfur-carrier protein]-C-terminal Gly-Gly-AMP + S-sulfanyl-L-cysteinyl-[cysteine desulfurase] + AH2 = [ThiS sulfur-carrier protein]-C-terminal-Gly-aminoethanethioate + L-cysteinyl-[cysteine desulfurase] + A + AMP + 2 H(+). Its pathway is cofactor biosynthesis; thiamine diphosphate biosynthesis. Its function is as follows. Catalyzes the ATP-dependent transfer of a sulfur to tRNA to produce 4-thiouridine in position 8 of tRNAs, which functions as a near-UV photosensor. Also catalyzes the transfer of sulfur to the sulfur carrier protein ThiS, forming ThiS-thiocarboxylate. This is a step in the synthesis of thiazole, in the thiamine biosynthesis pathway. The sulfur is donated as persulfide by IscS. The chain is tRNA sulfurtransferase from Escherichia coli O45:K1 (strain S88 / ExPEC).